Reading from the N-terminus, the 600-residue chain is Glutamine--fructose-6-phosphate aminotransferase [isomerizing] (600 aa).

The active-site Nucleophile; for GATase activity is the Cys-2. The Glutamine amidotransferase type-2 domain occupies 2 to 217 (CGIVGYIGQL…DKEMVIVTDD (216 aa)). SIS domains follow at residues 283–422 (IAAA…KNGI) and 452–590 (IARE…VDKP). The active-site For Fru-6P isomerization activity is the Lys-595.

Homodimer.

It localises to the cytoplasm. It catalyses the reaction D-fructose 6-phosphate + L-glutamine = D-glucosamine 6-phosphate + L-glutamate. Its function is as follows. Catalyzes the first step in hexosamine metabolism, converting fructose-6P into glucosamine-6P using glutamine as a nitrogen source. In Bacillus spizizenii (strain ATCC 23059 / NRRL B-14472 / W23) (Bacillus subtilis subsp. spizizenii), this protein is Glutamine--fructose-6-phosphate aminotransferase [isomerizing] (glmS).